We begin with the raw amino-acid sequence, 225 residues long: MMTWSQMSFSDMNSPIMEQMVFFHDHSMMIILMITILTIYMITNIMMNNLLSRSMMEGQEIEIIWTIIPAITLIFIAIPSLHLLYLTDETFNSQISIKVLGHQWYWSYEYSDFNKEFDSFMIPEPEMMKNSFRLLDTDNNLVIPINTNIKYLISSMDVIHSWTIPSLGIKMDAVPGRLNQSFSISSRPGLYYGQCSEICGANHSFMPISLGVTSMKNFINFINSS.

Residues 1 to 26 (MMTWSQMSFSDMNSPIMEQMVFFHDH) lie on the Mitochondrial intermembrane side of the membrane. The helical transmembrane segment at 27 to 48 (SMMIILMITILTIYMITNIMMN) threads the bilayer. Topologically, residues 49-62 (NLLSRSMMEGQEIE) are mitochondrial matrix. A helical membrane pass occupies residues 63–82 (IIWTIIPAITLIFIAIPSLH). The Mitochondrial intermembrane segment spans residues 83–225 (LLYLTDETFN…KNFINFINSS (143 aa)). Residues His160, Cys195, Glu197, Cys199, His203, and Met206 each contribute to the Cu cation site. Glu197 is a Mg(2+) binding site.

The protein belongs to the cytochrome c oxidase subunit 2 family. As to quaternary structure, component of the cytochrome c oxidase (complex IV, CIV), a multisubunit enzyme composed of a catalytic core of 3 subunits and several supernumerary subunits. The complex exists as a monomer or a dimer and forms supercomplexes (SCs) in the inner mitochondrial membrane with ubiquinol-cytochrome c oxidoreductase (cytochrome b-c1 complex, complex III, CIII). The cofactor is Cu cation.

Its subcellular location is the mitochondrion inner membrane. The enzyme catalyses 4 Fe(II)-[cytochrome c] + O2 + 8 H(+)(in) = 4 Fe(III)-[cytochrome c] + 2 H2O + 4 H(+)(out). Functionally, component of the cytochrome c oxidase, the last enzyme in the mitochondrial electron transport chain which drives oxidative phosphorylation. The respiratory chain contains 3 multisubunit complexes succinate dehydrogenase (complex II, CII), ubiquinol-cytochrome c oxidoreductase (cytochrome b-c1 complex, complex III, CIII) and cytochrome c oxidase (complex IV, CIV), that cooperate to transfer electrons derived from NADH and succinate to molecular oxygen, creating an electrochemical gradient over the inner membrane that drives transmembrane transport and the ATP synthase. Cytochrome c oxidase is the component of the respiratory chain that catalyzes the reduction of oxygen to water. Electrons originating from reduced cytochrome c in the intermembrane space (IMS) are transferred via the dinuclear copper A center (CU(A)) of subunit 2 and heme A of subunit 1 to the active site in subunit 1, a binuclear center (BNC) formed by heme A3 and copper B (CU(B)). The BNC reduces molecular oxygen to 2 water molecules using 4 electrons from cytochrome c in the IMS and 4 protons from the mitochondrial matrix. This chain is Cytochrome c oxidase subunit 2 (COII), found in Rhipicephalus sanguineus (Brown dog tick).